A 451-amino-acid chain; its full sequence is tRNA-2-methylthio-N(6)-dimethylallyladenosine synthase (451 aa).

The MTTase N-terminal domain maps to 6-122; sequence RRYHIITFGC…LDQLLEQVWA (117 aa). The [4Fe-4S] cluster site is built by C15, C51, C85, C157, C161, and C164. The Radical SAM core domain occupies 143–384; that stretch reads RESTVSAWVN…STQAMERSQR (242 aa). The region spanning 383-447 is the TRAM domain; the sequence is QRYLGRVEEV…AFSLTGEALS (65 aa).

Belongs to the methylthiotransferase family. MiaB subfamily. In terms of assembly, monomer. [4Fe-4S] cluster is required as a cofactor.

The protein localises to the cytoplasm. The catalysed reaction is N(6)-dimethylallyladenosine(37) in tRNA + (sulfur carrier)-SH + AH2 + 2 S-adenosyl-L-methionine = 2-methylsulfanyl-N(6)-dimethylallyladenosine(37) in tRNA + (sulfur carrier)-H + 5'-deoxyadenosine + L-methionine + A + S-adenosyl-L-homocysteine + 2 H(+). Its function is as follows. Catalyzes the methylthiolation of N6-(dimethylallyl)adenosine (i(6)A), leading to the formation of 2-methylthio-N6-(dimethylallyl)adenosine (ms(2)i(6)A) at position 37 in tRNAs that read codons beginning with uridine. The polypeptide is tRNA-2-methylthio-N(6)-dimethylallyladenosine synthase (Synechocystis sp. (strain ATCC 27184 / PCC 6803 / Kazusa)).